A 305-amino-acid polypeptide reads, in one-letter code: DNA-directed RNA polymerase 35 kDa subunit (305 aa).

It belongs to the poxviridae DNA-directed RNA polymerase 35 kDa subunit family. As to quaternary structure, the DNA-dependent RNA polymerase used for intermediate and late genes expression consists of eight subunits 147 kDa, 133 kDa, 35 kDa, 30 kDa, 22 kDa, 19 kDa, 18 kDa and 7 kDa totalling more than 500 kDa in mass. The same holoenzyme, with the addition of the transcription-specificity factor RAP94, is used for early gene expression.

It localises to the virion. It carries out the reaction RNA(n) + a ribonucleoside 5'-triphosphate = RNA(n+1) + diphosphate. Its function is as follows. Part of the DNA-dependent RNA polymerase which catalyzes the transcription of viral DNA into RNA using the four ribonucleoside triphosphates as substrates. Responsible for the transcription of early, intermediate and late genes. DNA-dependent RNA polymerase associates with the early transcription factor (ETF) thereby allowing the early genes transcription. Late transcription, and probably also intermediate transcription, require newly synthesized RNA polymerase. This is DNA-directed RNA polymerase 35 kDa subunit (RPO35) from Rabbitpox virus (strain Utrecht) (RPV).